Here is a 597-residue protein sequence, read N- to C-terminus: Phosphomethylpyrimidine synthase (597 aa).

Residues Asn-207, Met-236, Tyr-265, His-301, Ser-321 to Gly-323, Asp-362 to Arg-365, and Glu-401 each bind substrate. His-405 contacts Zn(2+). Tyr-428 provides a ligand contact to substrate. His-469 lines the Zn(2+) pocket. Residues Cys-549, Cys-552, and Cys-557 each contribute to the [4Fe-4S] cluster site.

Belongs to the ThiC family. As to quaternary structure, homodimer. It depends on [4Fe-4S] cluster as a cofactor.

It catalyses the reaction 5-amino-1-(5-phospho-beta-D-ribosyl)imidazole + S-adenosyl-L-methionine = 4-amino-2-methyl-5-(phosphooxymethyl)pyrimidine + CO + 5'-deoxyadenosine + formate + L-methionine + 3 H(+). It functions in the pathway cofactor biosynthesis; thiamine diphosphate biosynthesis. Functionally, catalyzes the synthesis of the hydroxymethylpyrimidine phosphate (HMP-P) moiety of thiamine from aminoimidazole ribotide (AIR) in a radical S-adenosyl-L-methionine (SAM)-dependent reaction. The sequence is that of Phosphomethylpyrimidine synthase from Gluconobacter oxydans (strain 621H) (Gluconobacter suboxydans).